The following is a 255-amino-acid chain: 4-hydroxy-tetrahydrodipicolinate reductase (255 aa).

NAD(+) contacts are provided by residues 9–14, 89–91, and 115–118; these read GFKGRM, GTT, and APNF. His145 functions as the Proton donor/acceptor in the catalytic mechanism. His146 serves as a coordination point for (S)-2,3,4,5-tetrahydrodipicolinate. The active-site Proton donor is Lys149. 155–156 lines the (S)-2,3,4,5-tetrahydrodipicolinate pocket; sequence GT.

It belongs to the DapB family.

Its subcellular location is the cytoplasm. The catalysed reaction is (S)-2,3,4,5-tetrahydrodipicolinate + NAD(+) + H2O = (2S,4S)-4-hydroxy-2,3,4,5-tetrahydrodipicolinate + NADH + H(+). The enzyme catalyses (S)-2,3,4,5-tetrahydrodipicolinate + NADP(+) + H2O = (2S,4S)-4-hydroxy-2,3,4,5-tetrahydrodipicolinate + NADPH + H(+). It participates in amino-acid biosynthesis; L-lysine biosynthesis via DAP pathway; (S)-tetrahydrodipicolinate from L-aspartate: step 4/4. Functionally, catalyzes the conversion of 4-hydroxy-tetrahydrodipicolinate (HTPA) to tetrahydrodipicolinate. The polypeptide is 4-hydroxy-tetrahydrodipicolinate reductase (Streptococcus thermophilus (strain CNRZ 1066)).